Consider the following 66-residue polypeptide: Small ribosomal subunit protein bS21 (66 aa).

The protein belongs to the bacterial ribosomal protein bS21 family.

The polypeptide is Small ribosomal subunit protein bS21 (Rickettsia akari (strain Hartford)).